Consider the following 144-residue polypeptide: Large ribosomal subunit protein uL13 (144 aa).

It belongs to the universal ribosomal protein uL13 family. Part of the 50S ribosomal subunit.

In terms of biological role, this protein is one of the early assembly proteins of the 50S ribosomal subunit, although it is not seen to bind rRNA by itself. It is important during the early stages of 50S assembly. This Lachnoclostridium phytofermentans (strain ATCC 700394 / DSM 18823 / ISDg) (Clostridium phytofermentans) protein is Large ribosomal subunit protein uL13.